Consider the following 432-residue polypeptide: Monoacylglycerol lipase ABHD2 (432 aa).

Residues 1-14 (MNTHESEVYTVAPE) are Cytoplasmic-facing. The chain crosses the membrane as a helical; Signal-anchor for type II membrane protein span at residues 15–35 (MPAMFDGMKLAAVATVLYVIV). Topologically, residues 36–432 (RCLNLKSPTA…NQTTCQENTS (397 aa)) are extracellular. An AB hydrolase-1 domain is found at 132–383 (TMVICPGIGN…HGGHLGFFEG (252 aa)). A glycan (N-linked (GlcNAc...) asparagine) is linked at N141. S212 acts as the Nucleophile in catalysis. Residue N225 is glycosylated (N-linked (GlcNAc...) asparagine). Active-site charge relay system residues include D346 and H377. Positions 413 to 432 (PPCQSKDAQSNQTTCQENTS) are disordered. A compositionally biased stretch (polar residues) spans 418 to 432 (KDAQSNQTTCQENTS). N423 carries N-linked (GlcNAc...) asparagine glycosylation.

The protein belongs to the AB hydrolase superfamily. AB hydrolase 4 family.

It localises to the cell membrane. The catalysed reaction is Hydrolyzes glycerol monoesters of long-chain fatty acids.. The enzyme catalyses an acetyl ester + H2O = an aliphatic alcohol + acetate + H(+). It catalyses the reaction a triacylglycerol + H2O = a diacylglycerol + a fatty acid + H(+). It carries out the reaction 2-(5Z,8Z,11Z,14Z-eicosatetraenoyl)-glycerol + H2O = glycerol + (5Z,8Z,11Z,14Z)-eicosatetraenoate + H(+). The catalysed reaction is a butanoate ester + H2O = an aliphatic alcohol + butanoate + H(+). The enzyme catalyses hexadecanoate ester + H2O = an aliphatic alcohol + hexadecanoate + H(+). Its activity is regulated as follows. Acylglycerol lipase activity is activated upon binding to progesterone. Functionally, progesterone-dependent acylglycerol lipase that catalyzes hydrolysis of endocannabinoid arachidonoylglycerol (AG) from cell membrane. Acts as a progesterone receptor: progesterone-binding activates the acylglycerol lipase activity, mediating degradation of 1-arachidonoylglycerol (1AG) and 2-arachidonoylglycerol (2AG) to glycerol and arachidonic acid (AA). Also displays an ester hydrolase activity against acetyl ester, butanoate ester and hexadecanoate ester. Plays a key role in sperm capacitation in response to progesterone by mediating degradation of 2AG, an inhibitor of the sperm calcium channel CatSper, leading to calcium influx via CatSper and sperm activation. May also play a role in smooth muscle cells migration. The polypeptide is Monoacylglycerol lipase ABHD2 (abhd2a) (Danio rerio (Zebrafish)).